Consider the following 206-residue polypeptide: Large ribosomal subunit protein uL3 (206 aa).

The segment at 126-155 (HGHAGGPGAHGSRFHRHPGSMGANSTPSRV) is disordered.

The protein belongs to the universal ribosomal protein uL3 family. In terms of assembly, part of the 50S ribosomal subunit. Forms a cluster with proteins L14 and L19.

One of the primary rRNA binding proteins, it binds directly near the 3'-end of the 23S rRNA, where it nucleates assembly of the 50S subunit. The protein is Large ribosomal subunit protein uL3 of Leptospira interrogans serogroup Icterohaemorrhagiae serovar copenhageni (strain Fiocruz L1-130).